The sequence spans 47 residues: Large ribosomal subunit protein bL33 (47 aa).

This sequence belongs to the bacterial ribosomal protein bL33 family.

The chain is Large ribosomal subunit protein bL33 from Staphylococcus xylosus.